A 302-amino-acid polypeptide reads, in one-letter code: Beta-lactamase (302 aa).

The span at 1-11 (MADRRRVHAWA) shows a compositional bias: basic residues. A signal peptide spans 1-29 (MADRRRVHAWARARPAAPEPAPPTPSAAA). Positions 1-43 (MADRRRVHAWARARPAAPEPAPPTPSAAAPSVAPGPAATPPDP) are disordered. Residues 26 to 36 (SAAAPSVAPGP) show a composition bias toward low complexity. Residue Ser85 is the Acyl-ester intermediate of the active site. Ser143 contributes to the substrate binding site. Glu179 functions as the Proton acceptor in the catalytic mechanism. A substrate-binding site is contributed by 247-249 (KTG).

Belongs to the class-A beta-lactamase family.

Its subcellular location is the secreted. It carries out the reaction a beta-lactam + H2O = a substituted beta-amino acid. Its function is as follows. Active on penicillins but not on cephalosporins. This Amycolatopsis lactamdurans (Nocardia lactamdurans) protein is Beta-lactamase (bla).